A 496-amino-acid polypeptide reads, in one-letter code: Cobyric acid synthase (496 aa).

Positions 255 to 445 constitute a GATase cobBQ-type domain; it reads DLEIAVLKLP…LHGLLDNGPW (191 aa). Catalysis depends on Cys-336, which acts as the Nucleophile. Residue His-437 is part of the active site.

Belongs to the CobB/CobQ family. CobQ subfamily.

It functions in the pathway cofactor biosynthesis; adenosylcobalamin biosynthesis. Functionally, catalyzes amidations at positions B, D, E, and G on adenosylcobyrinic A,C-diamide. NH(2) groups are provided by glutamine, and one molecule of ATP is hydrogenolyzed for each amidation. The polypeptide is Cobyric acid synthase (Parasynechococcus marenigrum (strain WH8102)).